A 381-amino-acid chain; its full sequence is Chaperone protein DnaJ (381 aa).

Residues 5 to 70 (DYYEVLGCDR…QKRGAYDRYG (66 aa)) form the J domain. The segment at 136–214 (GKTAQISIPT…CGGAGRVTRE (79 aa)) adopts a CR-type zinc-finger fold. The Zn(2+) site is built by Cys149, Cys152, Cys166, Cys169, Cys188, Cys191, Cys202, and Cys205. CXXCXGXG motif repeat units follow at residues 149–156 (CEVCSGSG), 166–173 (CRTCNGAG), 188–195 (CPSCQGRG), and 202–209 (CPNCGGAG).

The protein belongs to the DnaJ family. Homodimer. It depends on Zn(2+) as a cofactor.

Its subcellular location is the cytoplasm. Functionally, participates actively in the response to hyperosmotic and heat shock by preventing the aggregation of stress-denatured proteins and by disaggregating proteins, also in an autonomous, DnaK-independent fashion. Unfolded proteins bind initially to DnaJ; upon interaction with the DnaJ-bound protein, DnaK hydrolyzes its bound ATP, resulting in the formation of a stable complex. GrpE releases ADP from DnaK; ATP binding to DnaK triggers the release of the substrate protein, thus completing the reaction cycle. Several rounds of ATP-dependent interactions between DnaJ, DnaK and GrpE are required for fully efficient folding. Also involved, together with DnaK and GrpE, in the DNA replication of plasmids through activation of initiation proteins. This chain is Chaperone protein DnaJ, found in Azorhizobium caulinodans (strain ATCC 43989 / DSM 5975 / JCM 20966 / LMG 6465 / NBRC 14845 / NCIMB 13405 / ORS 571).